Consider the following 122-residue polypeptide: MKVFIILGALNAMMAVGTGAFGAHGLEDKLSDKYMSIWEKATTYQMYHGLGLLVIGLISGTTSINVNWAGWLLFFGIVFFSGSLYFLALTQVRILGAITPIGGVLFIIGWLVLVIATLKFAG.

4 consecutive transmembrane segments (helical) span residues 3–23 (VFII…AFGA), 46–66 (MYHG…SINV), 69–89 (AGWL…FLAL), and 98–118 (ITPI…IATL).

It belongs to the UPF0382 family.

Its subcellular location is the cell membrane. The sequence is that of UPF0382 membrane protein SE_0353 from Staphylococcus epidermidis (strain ATCC 12228 / FDA PCI 1200).